The chain runs to 49 residues: Lectin alpha chain (49 aa).

Belongs to the leguminous lectin family. Homotetramer. In terms of processing, the beta and gamma chains are produced by partial proteolytic processing of the lectin alpha chain by an asparaginyl endopeptidase. Mixture of 60% alpha lectin and 40% of its beta and gamma proteolytic fragments. As to expression, seed.

Functionally, D-mannose/D-glucose-binding lectin. This Dioclea violacea protein is Lectin alpha chain.